Here is a 207-residue protein sequence, read N- to C-terminus: Large ribosomal subunit protein uL4 (207 aa).

A disordered region spans residues 49-79; that stretch reads HKVKSRGEVSGGGKKPWRQKGTGRARAGTSR.

This sequence belongs to the universal ribosomal protein uL4 family. As to quaternary structure, part of the 50S ribosomal subunit.

In terms of biological role, one of the primary rRNA binding proteins, this protein initially binds near the 5'-end of the 23S rRNA. It is important during the early stages of 50S assembly. It makes multiple contacts with different domains of the 23S rRNA in the assembled 50S subunit and ribosome. Functionally, forms part of the polypeptide exit tunnel. This Heliobacterium modesticaldum (strain ATCC 51547 / Ice1) protein is Large ribosomal subunit protein uL4.